A 69-amino-acid polypeptide reads, in one-letter code: U2-agatoxin-Ao1z (69 aa).

Positions Met1–Ala20 are cleaved as a signal peptide. Residues Val21 to Arg34 constitute a propeptide that is removed on maturation. Disulfide bonds link Cys37-Cys53, Cys44-Cys58, and Cys52-Cys68.

The protein belongs to the neurotoxin 01 (U2-agtx) family. Expressed by the venom gland.

It is found in the secreted. In terms of biological role, insect active toxin causing rapid but reversible paralysis in crickets. No activity shown in mammals. Does not show effect on mammalian voltage-gated calcium channels. In Agelena orientalis (Funnel-web spider), this protein is U2-agatoxin-Ao1z.